Reading from the N-terminus, the 479-residue chain is Phosphatidylinositol 4-kinase type 2-beta (479 aa).

Acidic residues predominate over residues 1 to 10 (MESGSEEPDE). Positions 1-91 (MESGSEEPDE…PRVGAGHTGH (91 aa)) are disordered. Residues 18–34 (PALHAGPPAGRAAPGGA) show a composition bias toward low complexity. Positions 42-62 (GLEEEEEGEEDSGPEGDGEEE) are enriched in acidic residues. Residues 118-449 (GVLPERISQG…VQMPRVIVER (332 aa)) form the PI3K/PI4K catalytic domain. The interval 124 to 130 (ISQGSSG) is G-loop. Residues S131 and K146 each coordinate ATP. The segment at 151 to 153 (EPY) is important for substrate binding. Residues 159–172 (KWTKYFHKICCPCC) form an important for interaction with membranes region. Residues 255-258 (QLFV) and 269-270 (RK) each bind ATP. Positions 262-270 (KEADYWLRK) are important for interaction with membranes. Positions 299-307 (RNTDRGNDN) are catalytic loop. Residues 340–360 (AIDNGLAFPFKHPDEWRAYPF) form an activation loop region. D342 contacts ATP. The interval 355 to 364 (WRAYPFHWAW) is important for interaction with membranes.

The protein belongs to the PI3/PI4-kinase family. Type II PI4K subfamily.

Its subcellular location is the cytoplasm. The protein localises to the cytosol. The protein resides in the golgi apparatus membrane. It localises to the endoplasmic reticulum membrane. It is found in the cell membrane. Its subcellular location is the early endosome membrane. The catalysed reaction is a 1,2-diacyl-sn-glycero-3-phospho-(1D-myo-inositol) + ATP = a 1,2-diacyl-sn-glycero-3-phospho-(1D-myo-inositol 4-phosphate) + ADP + H(+). Functionally, contributes to the overall PI4-kinase activity of the cell. This contribution may be especially significant in plasma membrane, endosomal and Golgi compartments. The phosphorylation of phosphatidylinositol (PI) to PI4P is the first committed step in the generation of phosphatidylinositol 4,5-bisphosphate (PIP2), a precursor of the second messenger inositol 1,4,5-trisphosphate (InsP3). This Gallus gallus (Chicken) protein is Phosphatidylinositol 4-kinase type 2-beta (PI4K2B).